The following is a 203-amino-acid chain: MAEGQVLVLDGRGHLLGRLAAIVAKQVLLGRKVVVVRCEGINISGNFYRNKLKYLAFLRKRMNTNPSRGPYHFRAPSRIFWRTVRGMLPHKTKRGQAALERLKVFDGIPPPYDKKKRMVVPAALKVVRLKPTRKFAYLGRLAHEVGWKYQAVTATLEEKRKEKAKIHYRKKKQLMRLRKQAEKNIEKKIGKFTEVLKTHGFLV.

Alanine 2 carries the post-translational modification N-acetylalanine. Arginine 59 is subject to Citrulline. Phosphoserine is present on serine 77. Citrulline is present on arginine 140. Lysine 191 is subject to N6-acetyllysine.

Belongs to the universal ribosomal protein uL13 family. In terms of assembly, component of the 60S ribosome. Component of the GAIT complex. Interacts with EIF4G1. Phosphorylation at Ser-77 upon interferon-gamma treatment in macrophages involves a DAPK1-DAPK3 kinase cascade and is causing release from the ribosome, association with the GAIT complex and subsequent involvement in transcript-selective translation inhibition. Post-translationally, citrullinated by PADI4.

The protein resides in the cytoplasm. Its function is as follows. Associated with ribosomes but is not required for canonical ribosome function and has extra-ribosomal functions. Component of the GAIT (gamma interferon-activated inhibitor of translation) complex which mediates interferon-gamma-induced transcript-selective translation inhibition in inflammation processes. Upon interferon-gamma activation and subsequent phosphorylation dissociates from the ribosome and assembles into the GAIT complex which binds to stem loop-containing GAIT elements in the 3'-UTR of diverse inflammatory mRNAs (such as ceruplasmin) and suppresses their translation. In the GAIT complex interacts with m7G cap-bound eIF4G at or near the eIF3-binding site and blocks the recruitment of the 43S ribosomal complex. Involved in methylation of rRNA. This is Large ribosomal subunit protein uL13 (RPL13A) from Bos taurus (Bovine).